The following is an 840-amino-acid chain: Sorting nexin-25 (840 aa).

The region spanning 1 to 164 (MDKALKEVFD…MLLAQLAYRE (164 aa)) is the PXA domain. Positions 287–401 (QFEDILANTF…IVSDLYEKLL (115 aa)) constitute an RGS domain. The stretch at 434 to 499 (TNQINEQASF…RTDLQLHMAR (66 aa)) forms a coiled coil. In terms of domain architecture, PX spans 508-628 (GMWKASITSG…AFLSPSPDYL (121 aa)). Position 665 is a phosphoserine (serine 665).

It belongs to the sorting nexin family.

The protein localises to the endosome membrane. In terms of biological role, may be involved in several stages of intracellular trafficking. The chain is Sorting nexin-25 (SNX25) from Homo sapiens (Human).